We begin with the raw amino-acid sequence, 866 residues long: Primer-independent DNA polymerase PolB (866 aa).

Residues 50–286 (SDLTLHIGFD…DRVPATIGAM (237 aa)) form an exonuclease domain region. Residues 287–385 (AVSRFTKTLK…GLLDILTPDY (99 aa)) are palm1 domain. The interval 386–481 (GNIRLSKNPD…NSESTSVFLP (96 aa)) is TPR1 domain. The segment at 482 to 522 (FVQQVRENRNRHIKGSLEEKFWKEIGNSLYGKLAQGLRAKT) is fingers domain. Residues 523-549 (AFDTARGLNRSLPPSSVTQPFFAAHVT) form a TPR2 domain region. Positions 550–678 (GFIRAVVGEL…PGQTLSRSTL (129 aa)) are palm2 domain. The tract at residues 679 to 866 (ISTREMWLSE…RKYPTFCLPV (188 aa)) is thumb domain.

Requires Mn(2+) as cofactor.

It carries out the reaction DNA(n) + a 2'-deoxyribonucleoside 5'-triphosphate = DNA(n+1) + diphosphate. Its function is as follows. DNA polymerase with primer-independent templated DNA polymerization activity, primer-dependent DNA polymerization activity with strand displacement, translesion synthesis activity across non-bulky base damage, 3'-5' exodeoxyribonuclease activity, and de novo primer synthesis activity. The enzyme is processive and faithful. Translation synthesis across abasic sites is coupled to de novo primer synthesis. Overexpression of wild-type protein increases survival of cells upon mitomycin C or UV treatment. The sequence is that of Primer-independent DNA polymerase PolB (pi-polB) from Escherichia coli.